The primary structure comprises 464 residues: ATP synthase subunit beta (464 aa).

Gly-151–Thr-158 lines the ATP pocket.

The protein belongs to the ATPase alpha/beta chains family. F-type ATPases have 2 components, CF(1) - the catalytic core - and CF(0) - the membrane proton channel. CF(1) has five subunits: alpha(3), beta(3), gamma(1), delta(1), epsilon(1). CF(0) has three main subunits: a(1), b(2) and c(9-12). The alpha and beta chains form an alternating ring which encloses part of the gamma chain. CF(1) is attached to CF(0) by a central stalk formed by the gamma and epsilon chains, while a peripheral stalk is formed by the delta and b chains.

It localises to the cell membrane. The catalysed reaction is ATP + H2O + 4 H(+)(in) = ADP + phosphate + 5 H(+)(out). In terms of biological role, produces ATP from ADP in the presence of a proton gradient across the membrane. The catalytic sites are hosted primarily by the beta subunits. The chain is ATP synthase subunit beta from Clostridium kluyveri (strain ATCC 8527 / DSM 555 / NBRC 12016 / NCIMB 10680 / K1).